A 439-amino-acid polypeptide reads, in one-letter code: Glutamine synthetase (439 aa).

The GS beta-grasp domain maps to 12-93 (SKIKFVQLVF…VYGFIYKDNK (82 aa)). A GS catalytic domain is found at 99 to 439 (PRGILKRALE…EWELERYFFL (341 aa)). Residues Glu-122 and Glu-124 each coordinate Mg(2+). Glu-172 is a binding site for ATP. Glu-177 and Glu-184 together coordinate Mg(2+). An L-glutamate-binding site is contributed by Gly-229. His-233 serves as a coordination point for Mg(2+). Residues 235–237 (HIS) and Ser-237 contribute to the ATP site. 3 residues coordinate L-glutamate: Arg-283, Glu-289, and Arg-301. The ATP site is built by Arg-301, Arg-306, and Lys-313. Glu-318 is a binding site for Mg(2+). Arg-320 is a binding site for L-glutamate.

The protein belongs to the glutamine synthetase family. Oligomer of 12 subunits arranged in the form of two hexagons. Mg(2+) serves as cofactor.

Its subcellular location is the cytoplasm. It carries out the reaction L-glutamate + NH4(+) + ATP = L-glutamine + ADP + phosphate + H(+). In terms of biological role, probably involved in nitrogen metabolism via ammonium assimilation. Catalyzes the ATP-dependent biosynthesis of glutamine from glutamate and ammonia. This Pyrococcus woesei protein is Glutamine synthetase.